Here is a 174-residue protein sequence, read N- to C-terminus: Secreted protein A (174 aa).

An N-terminal signal peptide occupies residues Met-1–Ala-19. N-linked (GlcNAc...) asparagine glycosylation is present at Asn-156.

This sequence belongs to the Sct family. Post-translationally, probably contains disulfide bonds.

It is found in the secreted. The protein localises to the extracellular vesicle. This is Secreted protein A (p17) from Dictyostelium discoideum (Social amoeba).